Reading from the N-terminus, the 246-residue chain is 14-3-3 protein eta (246 aa).

G2 carries the post-translational modification N-acetylglycine. Residues S25 and S59 each carry the phosphoserine modification.

This sequence belongs to the 14-3-3 family. Homodimer. Interacts with many nuclear hormone receptors and cofactors including AR, ESR1, ESR2, MC2R, NR3C1, NRIP1, PPARBP and THRA. Interacts with ABL1 (phosphorylated form); the interaction retains it in the cytoplasm. Interacts with ARHGEF28 and CDK16. Weakly interacts with CDKN1B. Interacts with GAB2. Interacts with KCNK18 in a phosphorylation-dependent manner. Interacts with SAMSN1. Interacts with the 'Ser-241' phosphorylated form of PDPK1. Interacts with the 'Thr-369' phosphorylated form of DAPK2. Interacts with PI4KB, TBC1D22A and TBC1D22B. Interacts with SLITRK1. Interacts with MEFV. In terms of processing, phosphorylated on Ser-59 by protein kinase C delta type catalytic subunit in a sphingosine-dependent fashion. As to expression, expressed mainly in the brain and present in other tissues albeit at lower levels.

Its function is as follows. Adapter protein implicated in the regulation of a large spectrum of both general and specialized signaling pathways. Binds to a large number of partners, usually by recognition of a phosphoserine or phosphothreonine motif. Binding generally results in the modulation of the activity of the binding partner. Negatively regulates the kinase activity of PDPK1. This is 14-3-3 protein eta (YWHAH) from Homo sapiens (Human).